The following is a 390-amino-acid chain: GTPase Obg (390 aa).

The 159-residue stretch at 1–159 (MKFVDEATIK…RELRLELLLL (159 aa)) folds into the Obg domain. The OBG-type G domain occupies 160–333 (ADVGMLGLPN…LCDELADFMD (174 aa)). Residues 166-173 (GLPNAGKS), 191-195 (FTTLI), 213-216 (DIPG), 283-286 (NKTD), and 314-316 (AAV) each bind GTP. Mg(2+)-binding residues include serine 173 and threonine 193.

The protein belongs to the TRAFAC class OBG-HflX-like GTPase superfamily. OBG GTPase family. In terms of assembly, monomer. Requires Mg(2+) as cofactor.

The protein resides in the cytoplasm. Functionally, an essential GTPase which binds GTP, GDP and possibly (p)ppGpp with moderate affinity, with high nucleotide exchange rates and a fairly low GTP hydrolysis rate. Plays a role in control of the cell cycle, stress response, ribosome biogenesis and in those bacteria that undergo differentiation, in morphogenesis control. This Aliivibrio fischeri (strain MJ11) (Vibrio fischeri) protein is GTPase Obg.